The following is a 627-amino-acid chain: 1-deoxy-D-xylulose-5-phosphate synthase (627 aa).

Thiamine diphosphate contacts are provided by residues H87 and 128 to 130; that span reads GHS. D159 contributes to the Mg(2+) binding site. Thiamine diphosphate is bound by residues 160 to 161, N188, F295, and E375; that span reads GA. N188 provides a ligand contact to Mg(2+).

It belongs to the transketolase family. DXPS subfamily. Homodimer. Mg(2+) is required as a cofactor. The cofactor is thiamine diphosphate.

It carries out the reaction D-glyceraldehyde 3-phosphate + pyruvate + H(+) = 1-deoxy-D-xylulose 5-phosphate + CO2. It functions in the pathway metabolic intermediate biosynthesis; 1-deoxy-D-xylulose 5-phosphate biosynthesis; 1-deoxy-D-xylulose 5-phosphate from D-glyceraldehyde 3-phosphate and pyruvate: step 1/1. In terms of biological role, catalyzes the acyloin condensation reaction between C atoms 2 and 3 of pyruvate and glyceraldehyde 3-phosphate to yield 1-deoxy-D-xylulose-5-phosphate (DXP). The polypeptide is 1-deoxy-D-xylulose-5-phosphate synthase (Pseudomonas paraeruginosa (strain DSM 24068 / PA7) (Pseudomonas aeruginosa (strain PA7))).